Consider the following 83-residue polypeptide: MKTLLLTLVVVTIVCLDLGYTMTCCNQQSSQPKTTTICAGGESSCYKKTWSDHRGSRTERGCGCPHVKPGIKLTCCKTDECNN.

The signal sequence occupies residues 1–21; the sequence is MKTLLLTLVVVTIVCLDLGYT. Cystine bridges form between Cys24/Cys45, Cys38/Cys62, Cys64/Cys75, and Cys76/Cys81.

Belongs to the three-finger toxin family. Short-chain subfamily. Type I alpha-neurotoxin sub-subfamily. Expressed by the venom gland.

Its subcellular location is the secreted. In terms of biological role, binds to muscle nicotinic acetylcholine receptor (nAChR) and inhibit acetylcholine from binding to the receptor, thereby impairing neuromuscular transmission. The protein is Short neurotoxin 1 of Pseudechis australis (Mulga snake).